The sequence spans 196 residues: NAD(P)H-quinone oxidoreductase subunit I (196 aa).

4Fe-4S ferredoxin-type domains follow at residues G55 to E84 and K95 to E124. Positions 64, 67, 70, 74, 104, 107, 110, and 114 each coordinate [4Fe-4S] cluster. The segment at S170–S196 is disordered.

This sequence belongs to the complex I 23 kDa subunit family. As to quaternary structure, NDH-1 is composed of at least 11 different subunits. [4Fe-4S] cluster is required as a cofactor.

It is found in the cellular thylakoid membrane. The enzyme catalyses a plastoquinone + NADH + (n+1) H(+)(in) = a plastoquinol + NAD(+) + n H(+)(out). It catalyses the reaction a plastoquinone + NADPH + (n+1) H(+)(in) = a plastoquinol + NADP(+) + n H(+)(out). In terms of biological role, NDH-1 shuttles electrons from an unknown electron donor, via FMN and iron-sulfur (Fe-S) centers, to quinones in the respiratory and/or the photosynthetic chain. The immediate electron acceptor for the enzyme in this species is believed to be plastoquinone. Couples the redox reaction to proton translocation, and thus conserves the redox energy in a proton gradient. The chain is NAD(P)H-quinone oxidoreductase subunit I from Crocosphaera subtropica (strain ATCC 51142 / BH68) (Cyanothece sp. (strain ATCC 51142)).